A 167-amino-acid chain; its full sequence is Phospholipase A2 (167 aa).

Residues 1 to 18 form the signal peptide; it reads MQVVLGSLFLLLLSTSHG. The propeptide occupies 19–33; sequence WQIRDRIGDNELEER. Ca(2+)-binding residues include tryptophan 41, glycine 43, and glycine 45. Cystine bridges form between cysteine 42–cysteine 64, cysteine 63–cysteine 103, cysteine 70–cysteine 96, cysteine 94–cysteine 128, and cysteine 138–cysteine 146. Asparagine 46 carries an N-linked (GlcNAc...) asparagine glycan. The active site involves histidine 67. Residue aspartate 68 participates in Ca(2+) binding. Aspartate 97 is an active-site residue.

The protein belongs to the phospholipase A2 family. Group III subfamily. Requires Ca(2+) as cofactor. N-glycosylated; contains mannose, N-acetylglucosamine and fucose alphal-6 and/or alphal-3 linked to the innermost N-acetylglucosamine. As to expression, expressed by the venom gland.

Its subcellular location is the secreted. The catalysed reaction is a 1,2-diacyl-sn-glycero-3-phosphocholine + H2O = a 1-acyl-sn-glycero-3-phosphocholine + a fatty acid + H(+). In terms of biological role, in vivo, intraplantar injection in mice cause spontaneous pain behaviors and paw swelling. PLA2 catalyzes the calcium-dependent hydrolysis of the 2-acyl groups in 3-sn-phosphoglycerides. This Apis mellifera (Honeybee) protein is Phospholipase A2.